Reading from the N-terminus, the 545-residue chain is ATP synthase subunit alpha, mitochondrial (545 aa).

A mitochondrion-targeting transit peptide spans methionine 1–leucine 35. Phosphoserine is present on residues serine 57 and serine 178. ATP is bound at residue glycine 206–threonine 213.

Belongs to the ATPase alpha/beta chains family. As to quaternary structure, F-type ATPases have 2 components, CF(1) - the catalytic core - and CF(0) - the membrane proton channel. CF(1) has five subunits: alpha(3), beta(3), gamma(1), delta(1), epsilon(1). CF(0) has three main subunits: a, b and c.

Its subcellular location is the mitochondrion inner membrane. Mitochondrial membrane ATP synthase (F(1)F(0) ATP synthase or Complex V) produces ATP from ADP in the presence of a proton gradient across the membrane which is generated by electron transport complexes of the respiratory chain. F-type ATPases consist of two structural domains, F(1) - containing the extramembraneous catalytic core, and F(0) - containing the membrane proton channel, linked together by a central stalk and a peripheral stalk. During catalysis, ATP synthesis in the catalytic domain of F(1) is coupled via a rotary mechanism of the central stalk subunits to proton translocation. Subunits alpha and beta form the catalytic core in F(1). Rotation of the central stalk against the surrounding alpha(3)beta(3) subunits leads to hydrolysis of ATP in three separate catalytic sites on the beta subunits. Subunit alpha does not bear the catalytic high-affinity ATP-binding sites. The chain is ATP synthase subunit alpha, mitochondrial (ATP1) from Saccharomyces cerevisiae (strain ATCC 204508 / S288c) (Baker's yeast).